An 88-amino-acid polypeptide reads, in one-letter code: Small ribosomal subunit protein bS20 (88 aa).

The protein belongs to the bacterial ribosomal protein bS20 family.

In terms of biological role, binds directly to 16S ribosomal RNA. The polypeptide is Small ribosomal subunit protein bS20 (Chelativorans sp. (strain BNC1)).